The sequence spans 285 residues: UstYa family oxidase phomYe (285 aa).

The helical transmembrane segment at 32–54 (LFYGWKGIAFLSTLTNVLFISGF) threads the bilayer. The interval 143–165 (YGFGTPLTGPGSEGNEHDPTPWT) is disordered. The HXXHC 1 motif lies at 177-181 (HQLHC). The N-linked (GlcNAc...) asparagine glycan is linked to Asn202. An HXXHC 2 motif is present at residues 209 to 213 (HVDHC).

The protein belongs to the ustYa family.

It localises to the membrane. It functions in the pathway mycotoxin biosynthesis. Functionally, ustYa family oxidase; part of the gene cluster that mediates the biosynthesis of the phomopsins, a group of hexapeptide mycotoxins which infects lupins and causes lupinosis disease in livestock. Within the pathway, phomYe catalyzes the desaturation of the Pro moiety into 3,4-dehydroproline (dPro). The pathway starts with the processing of the precursor phomA by several endopeptidases including kexin proteases as well as the cluster-specific S41 family peptidase phomP1 and the oligopeptidase phomG to produce 10 identical copies of the hexapeptide Tyr-Val-Ile-Pro-Ile-Asp. After being excised from the precursor peptide, the core peptides are cyclized and modified post-translationally by enzymes encoded within the gene cluster. The timing and order of proteolysis of the phomA precursor and PTMs are still unknown. Two tyrosinase-like enzymes, phomQ1 and phomQ2, catalyze the chlorination and hydroxylation of Tyr, respectively. PhomYb, is proposed to be involved in the construction of the macrocyclic structure. The other 4 ustYa family proteins may be involved in PTMs that generate the unique structure of phomopsin A. PhomYa is required for the hydroxylation of C-beta of Tyr. PhomYc, phomYd, and phomYe are responsible for the biosynthesis of 2,3-dehydroisoleucine (dIle), 2,3-dehydroaspartic acid (dAsp), and 3,4-dehydroproline (dPro), respectively. While dIle formation by phomYc is indispensable for the installation of dAsp by phomYd, the order of the other PTMs have not been elucidated yet. Most of the biosynthetic enzymes likely have broad substrate specificity, and thus, there might be a metabolic grid from a precursor to phomopsin A. The enzyme(s) responsible for the biosynthesis of 3,4-dehydrovaline (dVal) have also not been identified yet. Finally, phomM acts as an S-adenosylmethionine-dependent alpha-N-methyltransferase that catalyzes two successive N-methylation reactions, converting N-desmethyl-phomopsin A to phomopsin A and phomopsin A further to an N,N-dimethylated congener called phomopsin E. The polypeptide is UstYa family oxidase phomYe (Diaporthe leptostromiformis (Lupinosis disease fungus)).